Reading from the N-terminus, the 119-residue chain is MIARRNPEPLRFLPDEARSLPPPKLTDPRLLYIGFLGYCSGLIDNLIRRRPVATAGLHRQLLYITAFFFAGYYLVKREDYLYAVRDREMFGYMKLHPEDFPEEDKKTYGEIFEKFHPIR.

A helical transmembrane segment spans residues 56-75; that stretch reads GLHRQLLYITAFFFAGYYLV.

This sequence belongs to the complex I NDUFC2 subunit family. In terms of assembly, complex I is composed of 45 different subunits. Interacts with TMEM242.

Its subcellular location is the mitochondrion inner membrane. Functionally, accessory subunit of the mitochondrial membrane respiratory chain NADH dehydrogenase (Complex I), that is believed not to be involved in catalysis but required for the complex assembly. Complex I functions in the transfer of electrons from NADH to the respiratory chain. The immediate electron acceptor for the enzyme is believed to be ubiquinone. The protein is NADH dehydrogenase [ubiquinone] 1 subunit C2 of Pan troglodytes (Chimpanzee).